Consider the following 92-residue polypeptide: Serine protease inhibitor I/II (92 aa).

The signal sequence occupies residues 1–19 (MKLALALCAAFLLVVLVQA). Pacifastin domains are found at residues 20-54 (EQEC…CPPH) and 57-92 (EVTC…CPQK). Intrachain disulfides connect cysteine 23–cysteine 38, cysteine 33–cysteine 51, cysteine 36–cysteine 46, cysteine 60–cysteine 75, cysteine 70–cysteine 89, and cysteine 73–cysteine 84.

Belongs to the protease inhibitor I19 family. In terms of tissue distribution, expressed in hemolymph, ovaries, testes and fat body of adults but are absent in the gut. Also present in larval hemolymph and fat body.

Its subcellular location is the secreted. Its function is as follows. In vitro, is active against alpha-chymotrypsin and trypsin. Functionally, in vitro, is active against alpha-chymotrypsin and pancreatic elastase. This chain is Serine protease inhibitor I/II, found in Schistocerca gregaria (Desert locust).